The sequence spans 161 residues: Large ribosomal subunit protein uL10 (161 aa).

The protein belongs to the universal ribosomal protein uL10 family. As to quaternary structure, part of the ribosomal stalk of the 50S ribosomal subunit. The N-terminus interacts with L11 and the large rRNA to form the base of the stalk. The C-terminus forms an elongated spine to which L12 dimers bind in a sequential fashion forming a multimeric L10(L12)X complex.

Its function is as follows. Forms part of the ribosomal stalk, playing a central role in the interaction of the ribosome with GTP-bound translation factors. In Wigglesworthia glossinidia brevipalpis, this protein is Large ribosomal subunit protein uL10 (rplJ).